Consider the following 463-residue polypeptide: Glycine--tRNA ligase (463 aa).

R100 and E175 together coordinate substrate. Residues 207–209 (RNE), 217–222 (FRTREF), 291–292 (EL), and 335–338 (GADR) contribute to the ATP site. 222–226 (FEQME) is a substrate binding site. Residue 331–335 (EPSLG) coordinates substrate.

It belongs to the class-II aminoacyl-tRNA synthetase family. In terms of assembly, homodimer.

The protein localises to the cytoplasm. It catalyses the reaction tRNA(Gly) + glycine + ATP = glycyl-tRNA(Gly) + AMP + diphosphate. Catalyzes the attachment of glycine to tRNA(Gly). This chain is Glycine--tRNA ligase, found in Clostridium beijerinckii (strain ATCC 51743 / NCIMB 8052) (Clostridium acetobutylicum).